The sequence spans 374 residues: tRNA-specific 2-thiouridylase MnmA (374 aa).

Residues 13-20 (GMSGGVDS) and methionine 39 each bind ATP. The segment at 99 to 101 (NPD) is interaction with target base in tRNA. The Nucleophile role is filled by cysteine 104. Cysteine 104 and cysteine 201 are disulfide-bonded. Glycine 128 provides a ligand contact to ATP. The segment at 151-153 (KDQ) is interaction with tRNA. Cysteine 201 acts as the Cysteine persulfide intermediate in catalysis. Positions 313-314 (RY) are interaction with tRNA.

It belongs to the MnmA/TRMU family.

It localises to the cytoplasm. It carries out the reaction S-sulfanyl-L-cysteinyl-[protein] + uridine(34) in tRNA + AH2 + ATP = 2-thiouridine(34) in tRNA + L-cysteinyl-[protein] + A + AMP + diphosphate + H(+). Its function is as follows. Catalyzes the 2-thiolation of uridine at the wobble position (U34) of tRNA, leading to the formation of s(2)U34. The protein is tRNA-specific 2-thiouridylase MnmA of Streptococcus equi subsp. zooepidemicus (strain MGCS10565).